The following is a 185-amino-acid chain: Ribosome maturation factor RimM (185 aa).

In terms of domain architecture, PRC barrel spans 106–185 (TGDYYWKDLI…TIEVDWDPGF (80 aa)).

This sequence belongs to the RimM family. In terms of assembly, binds ribosomal protein uS19.

The protein localises to the cytoplasm. An accessory protein needed during the final step in the assembly of 30S ribosomal subunit, possibly for assembly of the head region. Essential for efficient processing of 16S rRNA. May be needed both before and after RbfA during the maturation of 16S rRNA. It has affinity for free ribosomal 30S subunits but not for 70S ribosomes. The polypeptide is Ribosome maturation factor RimM (Photorhabdus laumondii subsp. laumondii (strain DSM 15139 / CIP 105565 / TT01) (Photorhabdus luminescens subsp. laumondii)).